Consider the following 183-residue polypeptide: ATP-dependent protease subunit HslV (183 aa).

Thr7 is an active-site residue. Positions 162, 165, and 168 each coordinate Na(+).

This sequence belongs to the peptidase T1B family. HslV subfamily. In terms of assembly, a double ring-shaped homohexamer of HslV is capped on each side by a ring-shaped HslU homohexamer. The assembly of the HslU/HslV complex is dependent on binding of ATP.

The protein localises to the cytoplasm. It carries out the reaction ATP-dependent cleavage of peptide bonds with broad specificity.. Its activity is regulated as follows. Allosterically activated by HslU binding. In terms of biological role, protease subunit of a proteasome-like degradation complex believed to be a general protein degrading machinery. The protein is ATP-dependent protease subunit HslV of Chromobacterium violaceum (strain ATCC 12472 / DSM 30191 / JCM 1249 / CCUG 213 / NBRC 12614 / NCIMB 9131 / NCTC 9757 / MK).